We begin with the raw amino-acid sequence, 500 residues long: Coiled-coil domain-containing protein 85A (500 aa).

Positions 1–23 (MSKAAGGSAPAAESCPSAPAGAS) are enriched in low complexity. The disordered stretch occupies residues 1 to 30 (MSKAAGGSAPAAESCPSAPAGASTPTGVDD). Coiled-coil stretches lie at residues 38 to 104 (ELLQ…RDLC) and 132 to 171 (MHKEVALYLQKLKELEVKQEEVVKENMELKELCMLLDEEK). 2 disordered regions span residues 200–405 (RDVG…SGMN) and 426–465 (NRMLPQGSFRLSSGADGNNSSLNSPASFSGHTTPSQQPEP). Positions 204–215 (DGSSTSSTGSTD) are enriched in low complexity. Residues 231 to 254 (HLQKPRSEGSPEHTKHRSTSPEHL) are compositionally biased toward basic and acidic residues. Over residues 372–381 (GSGGSGGGSR) the composition is skewed to gly residues. Residues 383 to 395 (GTLRRPAQEDSSS) show a composition bias toward basic and acidic residues. Positions 404–429 (MNESTLSYVRQLEARVRQLEEENRML) form a coiled coil. A compositionally biased stretch (polar residues) spans 434-463 (FRLSSGADGNNSSLNSPASFSGHTTPSQQP). An Asymmetric dimethylarginine modification is found at Arg488.

It belongs to the CCDC85 family. As to quaternary structure, may interact with ARVCF; CTNND1; CTNND2 and PKP4.

The protein localises to the cell junction. It is found in the adherens junction. Functionally, may play a role in cell-cell adhesion and epithelium development through its interaction with proteins of the beta-catenin family. The chain is Coiled-coil domain-containing protein 85A (Ccdc85a) from Mus musculus (Mouse).